A 746-amino-acid polypeptide reads, in one-letter code: Actin filament-associated protein 1-like 1 (746 aa).

The tract at residues E88–E206 is disordered. Over residues H98–D107 the composition is skewed to polar residues. Pro residues predominate over residues S108–E119. Positions S139–S148 are enriched in low complexity. Residues D214–G310 enclose the PH 1 domain. The tract at residues E336–T371 is disordered. Basic and acidic residues predominate over residues S350–K359. In terms of domain architecture, PH 2 spans R406–G497. 2 disordered regions span residues E539 to Q596 and P723 to T746. Over residues S562–I575 the composition is skewed to polar residues. Positions G591 to A682 form a coiled coil. A compositionally biased stretch (basic and acidic residues) spans K736 to T746.

Its subcellular location is the cytoplasm. The protein localises to the cell projection. The protein resides in the podosome. It localises to the invadopodium. It is found in the cytoskeleton. Its subcellular location is the stress fiber. May be involved in podosome and invadosome formation. The protein is Actin filament-associated protein 1-like 1 (afap1l1) of Danio rerio (Zebrafish).